Here is an 894-residue protein sequence, read N- to C-terminus: Alpha-actinin-2 (894 aa).

The segment at 1-254 (MNQIEPGVQY…IMTYVSCFYH (254 aa)) is actin-binding. Calponin-homology (CH) domains lie at 38–142 (KQQR…LRFA) and 151–257 (TSAK…HAFA). Thr-237 is subject to Phosphothreonine. Spectrin repeat units lie at residues 281-391 (RLME…WLLN), 401-506 (HLAE…ALER), 516-627 (QLHL…SLQE), and 637-740 (RLRR…EVET). EF-hand domains follow at residues 753-788 (EQMNEFRASFNHFDRRKNGLMDHEDFRACLISMGYD) and 789-824 (LGEAEFARIMTLVDPNGQGTVTFQSFIDFMTRETAD). Asp-766, Asn-770, Asp-777, Asp-802, Asn-804, and Thr-808 together coordinate Ca(2+).

It belongs to the alpha-actinin family. As to quaternary structure, homodimer; antiparallel. Also forms heterodimers with ACTN3. Interacts with ADAM12, MYOZ1, MYOZ2 and MYOZ3. Interacts via its C-terminal region with the LDB3 PDZ domain. Interacts with XIRP2. Interacts with DST (via N-terminus). Interacts with PARVB. Interacts with SYNPO2. Ubiquitinated by FBXL22, leading to proteasomal degradation.

It localises to the cytoplasm. The protein localises to the myofibril. It is found in the sarcomere. Its subcellular location is the z line. Its function is as follows. F-actin cross-linking protein which is thought to anchor actin to a variety of intracellular structures. This is a bundling protein. This Mus musculus (Mouse) protein is Alpha-actinin-2 (Actn2).